Here is a 207-residue protein sequence, read N- to C-terminus: Dephospho-CoA kinase (207 aa).

The 198-residue stretch at 10-207 (TLGLTGGIGS…FYLTLRGGQS (198 aa)) folds into the DPCK domain. 18–23 (GSGKSA) is a binding site for ATP.

This sequence belongs to the CoaE family.

Its subcellular location is the cytoplasm. The enzyme catalyses 3'-dephospho-CoA + ATP = ADP + CoA + H(+). It functions in the pathway cofactor biosynthesis; coenzyme A biosynthesis; CoA from (R)-pantothenate: step 5/5. In terms of biological role, catalyzes the phosphorylation of the 3'-hydroxyl group of dephosphocoenzyme A to form coenzyme A. This Pseudomonas fluorescens (strain ATCC BAA-477 / NRRL B-23932 / Pf-5) protein is Dephospho-CoA kinase.